Here is a 738-residue protein sequence, read N- to C-terminus: MEHKRNNILLAGLFFLLLGLVSIARAQIPQWEKCGAFVEPASEELLDPEPRGPVNVEADRVESEKNGVSVFSGEVKFRRRGQWLDADEVLYDKPNDTVEAFGDVRYQDATMDVISDSAKVNLEADIGEAENARYFLRDYHARGEAGAVEREGSVKTELRDATFTTCDIGDNAWQLKADRVSLDHKEGVGWARGARLRLWDTTVFYVPFLRFPIDNRRKSGFLVPSGGSSSNSGIGISTPYYWNIAPNMDATITPRYLSDRGPMMEGEVRYLNPSNFGRIRGSFLPHDAKRDDYRGAFSYRHSGSPRPRWFTNLDLNLVSDDRYFEDFGNSLSIASTTVLNNSLDIGYQGNGWNALGRFQGFQTIDRSIPAFARPYQRLPQFLVDGFFPDRFLGLDVDFHGEVVRFDRDAAPPTGGVRLDFWPTVSLPFRTPGTFFTPSIGVRDTRYFLEDAPPGTDSTLSRTLPIVSMDTGAIFERSLTLWGSDLRQTLEPRAYYLYVPFEDQSAFPVFDSAPLDFYFSRLFQPNRFTGADRLNDANQLTLAVTTRLLQSDTGAELLRASIGQIQFFRDRRVTMPGAAKETDSSSLVIAEVAARLAREWSLRGELRFDPHKKQTDLGAAELHYRGDEGGLLNINYRFRRNFLEQLNVSGRYPIADNWSVVGRWYQSIADGRLLELLGGVEYDSCCWAIRLVGRSYITNIEGDRNNSVLVQLELKGLGNLGQNVERLLERSVLGYGQPF.

A signal peptide spans 1–26; it reads MEHKRNNILLAGLFFLLLGLVSIARA.

The protein belongs to the LptD family. In terms of assembly, component of the lipopolysaccharide transport and assembly complex. Interacts with LptE and LptA.

It localises to the cell outer membrane. In terms of biological role, together with LptE, is involved in the assembly of lipopolysaccharide (LPS) at the surface of the outer membrane. In Nitrosococcus oceani (strain ATCC 19707 / BCRC 17464 / JCM 30415 / NCIMB 11848 / C-107), this protein is LPS-assembly protein LptD.